The primary structure comprises 368 residues: Aspartate-semialdehyde dehydrogenase (368 aa).

NADP(+) contacts are provided by residues 10–13 (RGMV), 37–38 (TS), and glutamine 74. Residue arginine 103 coordinates phosphate. Residue cysteine 136 is the Acyl-thioester intermediate of the active site. Cysteine 136 carries the post-translational modification S-cysteinyl cysteine; in inhibited form. A substrate-binding site is contributed by glutamine 163. NADP(+) is bound by residues 166 to 167 (SG) and proline 194. Glutamate 242 is a substrate binding site. A phosphate-binding site is contributed by lysine 245. Arginine 268 provides a ligand contact to substrate. Histidine 275 acts as the Proton acceptor in catalysis. An NADP(+)-binding site is contributed by glutamine 351.

It belongs to the aspartate-semialdehyde dehydrogenase family. Homodimer.

The catalysed reaction is L-aspartate 4-semialdehyde + phosphate + NADP(+) = 4-phospho-L-aspartate + NADPH + H(+). Its pathway is amino-acid biosynthesis; L-lysine biosynthesis via DAP pathway; (S)-tetrahydrodipicolinate from L-aspartate: step 2/4. The protein operates within amino-acid biosynthesis; L-methionine biosynthesis via de novo pathway; L-homoserine from L-aspartate: step 2/3. It participates in amino-acid biosynthesis; L-threonine biosynthesis; L-threonine from L-aspartate: step 2/5. In terms of biological role, catalyzes the NADPH-dependent formation of L-aspartate-semialdehyde (L-ASA) by the reductive dephosphorylation of L-aspartyl-4-phosphate. The chain is Aspartate-semialdehyde dehydrogenase from Salmonella typhi.